We begin with the raw amino-acid sequence, 448 residues long: MHFVAISINHRTADVTLREQVAFRDDALRLAHEDLYETKAILENVILSTCNRTEVYAIVDQVHTGRYYIQRFLARSFGFEVDDIKDMSEVKVGDDAVEHLLRVTSGLDSIVLGETQILGQMRDAFFLAQNTGTTGTIFNHLFKQAITFAKKAHSETDIADNAVSVSYAAVELAKKVFGKLKSKHAVVIGAGEMGELSLLNLLGSGISNVTIVNRTLSKAKILAEKHNVSYDSLSALPSLLETTDIVISSTSAEDYIITNSMVKTISETRKLDSLVLIDIAVPRDIEPGIDAITNIFNYDVDDLKDLVDANLRERQLAAETIAGQIPEEIDSHNEWVNMLGVVPVIRALREKAMNIQAETMESIDRKLPDLSERERKVISKHTKSIINQMLKDPIKQAKELSTDKKSNEKLELFQNIFDIEAEDPREKAKLEKESRAKEILAHRIFSFE.

Residues 49–52, Ser109, 114–116, and Gln120 contribute to the substrate site; these read TCNR and ETQ. The active-site Nucleophile is the Cys50. 189 to 194 contributes to the NADP(+) binding site; that stretch reads GAGEMG.

The protein belongs to the glutamyl-tRNA reductase family. In terms of assembly, homodimer.

The enzyme catalyses (S)-4-amino-5-oxopentanoate + tRNA(Glu) + NADP(+) = L-glutamyl-tRNA(Glu) + NADPH + H(+). Its pathway is porphyrin-containing compound metabolism; protoporphyrin-IX biosynthesis; 5-aminolevulinate from L-glutamyl-tRNA(Glu): step 1/2. Catalyzes the NADPH-dependent reduction of glutamyl-tRNA(Glu) to glutamate 1-semialdehyde (GSA). The protein is Glutamyl-tRNA reductase of Staphylococcus epidermidis (strain ATCC 35984 / DSM 28319 / BCRC 17069 / CCUG 31568 / BM 3577 / RP62A).